The chain runs to 170 residues: Double homeobox protein 1 (170 aa).

DNA-binding regions (homeobox) lie at residues 19-78 (GRRM…LRQH) and 94-153 (GRRK…RGQS). Residues 75–100 (LRQHRRQSRPWPGRRDPQKGRRKRTA) are disordered.

This sequence belongs to the paired homeobox family. Expressed in rhabdomyosarcoma TE671 cells as well as in several other normal and cancer cells.

The protein resides in the nucleus. In terms of biological role, probable transcription activator. Binds the P5 DNA element sequence 5'-GATCTGAGTCTAATTGAGAATTACTGTAC-3'. The protein is Double homeobox protein 1 (DUX1) of Homo sapiens (Human).